The sequence spans 840 residues: Phosphatidylglycerol lysyltransferase (840 aa).

Residues M1–K8 lie on the Cytoplasmic side of the membrane. A helical membrane pass occupies residues I9–L29. The Extracellular portion of the chain corresponds to Y30 to S52. Residues L53–I73 traverse the membrane as a helical segment. Over L74–R89 the chain is Cytoplasmic. The chain crosses the membrane as a helical span at residues V90–G110. Over V111–H128 the chain is Extracellular. A helical transmembrane segment spans residues F129–V149. Over F150–K161 the chain is Cytoplasmic. A helical transmembrane segment spans residues I162–Y182. The Extracellular segment spans residues S183 to T200. The chain crosses the membrane as a helical span at residues L201–V221. At D222 to S229 the chain is on the cytoplasmic side. The helical transmembrane segment at F230 to F250 threads the bilayer. The Extracellular portion of the chain corresponds to G251 to V271. Residues L272–I292 form a helical membrane-spanning segment. At L293 to S337 the chain is on the cytoplasmic side. Residues L338–Y358 form a helical membrane-spanning segment. The Extracellular segment spans residues D359–Y369. A helical transmembrane segment spans residues Y370–I390. Residues Y391–S394 are Cytoplasmic-facing. 2 helical membrane-spanning segments follow: residues R395 to T415 and Y416 to F436. Residues R437–N450 lie on the Cytoplasmic side of the membrane. The helical transmembrane segment at L451–G471 threads the bilayer. The Extracellular segment spans residues T472–K489. Residues Y490 to F510 form a helical membrane-spanning segment. The Cytoplasmic portion of the chain corresponds to D511–K840.

Belongs to the LPG synthase family.

The protein localises to the cell membrane. The catalysed reaction is L-lysyl-tRNA(Lys) + a 1,2-diacyl-sn-glycero-3-phospho-(1'-sn-glycerol) = a 1,2-diacyl-sn-glycero-3-phospho-1'-(3'-O-L-lysyl)-sn-glycerol + tRNA(Lys). Catalyzes the transfer of a lysyl group from L-lysyl-tRNA(Lys) to membrane-bound phosphatidylglycerol (PG), which produces lysylphosphatidylglycerol (LPG), a major component of the bacterial membrane with a positive net charge. LPG synthesis contributes to bacterial virulence as it is involved in the resistance mechanism against cationic antimicrobial peptides (CAMP) produces by the host's immune system (defensins, cathelicidins) and by the competing microorganisms (bacteriocins). In fact, the modification of anionic phosphatidylglycerol with positively charged L-lysine results in repulsion of the peptides. The chain is Phosphatidylglycerol lysyltransferase (mprF) from Staphylococcus aureus (strain MRSA252).